The chain runs to 360 residues: NADH-quinone oxidoreductase subunit H (360 aa).

A run of 8 helical transmembrane segments spans residues 20–40 (GMVWPVLWILLKIVALLIPLM), 95–115 (GLFVLGPVMAIMPALAAWVVI), 130–150 (LLLVMAITSIEVYGVIIAGWA), 176–196 (FCLLIVIMVSGSMNLTEIVLA), 206–226 (GIGFLSWNWLPLLPVFLVYLI), 261–281 (IFFLAEYASMWLVSILAALMF), 297–317 (IPGWIWLGIKTCLVVSMFIWI), and 336–356 (IFIPVTLACLLIAGGWLLSPW).

This sequence belongs to the complex I subunit 1 family. As to quaternary structure, NDH-1 is composed of 14 different subunits. Subunits NuoA, H, J, K, L, M, N constitute the membrane sector of the complex.

It is found in the cell inner membrane. It catalyses the reaction a quinone + NADH + 5 H(+)(in) = a quinol + NAD(+) + 4 H(+)(out). In terms of biological role, NDH-1 shuttles electrons from NADH, via FMN and iron-sulfur (Fe-S) centers, to quinones in the respiratory chain. The immediate electron acceptor for the enzyme in this species is believed to be ubiquinone. Couples the redox reaction to proton translocation (for every two electrons transferred, four hydrogen ions are translocated across the cytoplasmic membrane), and thus conserves the redox energy in a proton gradient. This subunit may bind ubiquinone. This is NADH-quinone oxidoreductase subunit H from Verminephrobacter eiseniae (strain EF01-2).